The primary structure comprises 519 residues: Flavonoid 8-hydroxylase 2, chloroplastic (519 aa).

A chloroplast-targeting transit peptide spans 1–46 (MEVLQASSLSFQLLRRHSRNNLINKFRNPSLPRIHMPRQNIDLKTF). In terms of domain architecture, Rieske spans 77–188 (WYPVASVCDL…SCVRNGIVWF (112 aa)). [2Fe-2S] cluster-binding residues include C119, H121, C139, and H142. Fe cation-binding residues include H241 and H246. Positions 447–450 (CSSC) match the Redox-active motif motif. Helical transmembrane passes span 462-478 (IGLQAMSLVFVAMAAAV) and 485-501 (YSMVAMAVLSFLASKWL).

Requires [2Fe-2S] cluster as cofactor. Glandular trichome-specific expression in leaves.

The protein resides in the plastid. Its subcellular location is the chloroplast membrane. The protein localises to the cytoplasm. The enzyme catalyses salvigenin + 2 reduced [2Fe-2S]-[ferredoxin] + O2 + 2 H(+) = 8-hydroxysalvigenin + 2 oxidized [2Fe-2S]-[ferredoxin] + H2O. The protein operates within flavonoid metabolism. In terms of biological role, rieske-type, PAO-family oxygenase involved in the biosynthesis of polymethoxylated flavonoids natural products such as nevadensin and salvigenin, aroma compounds which contribute to the flavor of sweet basil, and exhibit pharmacological activities such as anti-allergic, anti-oxidant, antibacterial, anti-proliferative, and anti-inflammatory effects. Catalyzes the hydroxylation of salvigenin to produce 8-hydroxysalvigenin (8-OH-SALV). The chain is Flavonoid 8-hydroxylase 2, chloroplastic from Ocimum basilicum (Sweet basil).